Here is a 303-residue protein sequence, read N- to C-terminus: Uricase (303 aa).

Ala2 bears the N-acetylalanine mark. Lys10 and Lys23 each carry N6-acetyllysine; alternate. 2 positions are modified to N6-succinyllysine; alternate: Lys10 and Lys23. The active-site Charge relay system is the Lys23. Lys27 and Lys36 each carry N6-acetyllysine. Phosphoserine occurs at positions 39 and 63. The active-site Charge relay system is the Thr68. Urate is bound by residues Thr68 and Asp69. Lys118, Lys122, and Lys164 each carry N6-acetyllysine. Residue Phe170 participates in urate binding. 2 positions are modified to N6-acetyllysine: Lys175 and Lys185. Urate is bound at residue Arg187. An N6-acetyllysine; alternate mark is found at Lys220 and Lys227. Residues Lys220 and Lys227 each carry the N6-succinyllysine; alternate modification. A Phosphoserine modification is found at Ser231. Urate-binding residues include Val234, Gln235, and Asn261. His263 (charge relay system) is an active-site residue. Lys277 is subject to N6-acetyllysine. A Phosphotyrosine modification is found at Tyr288. The Microbody targeting signal motif lies at 301 to 303 (SRL).

This sequence belongs to the uricase family. In terms of processing, acetylation of Lys-118, Lys-164 and Lys-290 is observed in liver mitochondria from fasted mice but not from fed mice. May be deacetylated by Sirt5; however it is unclear whether Sirt5 mediates deacetylation or desuccinylation of Uox; additional evidence is required to validate these results.

The protein localises to the peroxisome. It is found in the mitochondrion. It catalyses the reaction urate + O2 + H2O = 5-hydroxyisourate + H2O2. It functions in the pathway purine metabolism; urate degradation; (S)-allantoin from urate: step 1/3. In terms of biological role, catalyzes the oxidation of uric acid to 5-hydroxyisourate, which is further processed to form (S)-allantoin. The polypeptide is Uricase (Uox) (Mus musculus (Mouse)).